The sequence spans 244 residues: uncharacterized protein (244 aa).

Helical transmembrane passes span 21–41, 44–64, 66–86, 139–159, 165–185, and 199–219; these read FPYS…YGIY, ALGF…AGSV, FIAA…LITL, WYMF…AAMG, VLPF…LVIF, and LLGL…YFLI.

This sequence belongs to the AzlC family.

It is found in the cell membrane. This is an uncharacterized protein from Haemophilus influenzae (strain ATCC 51907 / DSM 11121 / KW20 / Rd).